The chain runs to 309 residues: Ribosomal RNA small subunit methyltransferase H (309 aa).

S-adenosyl-L-methionine is bound by residues 41-43 (GGH), D61, F85, D102, and Q109.

The protein belongs to the methyltransferase superfamily. RsmH family.

It is found in the cytoplasm. The catalysed reaction is cytidine(1402) in 16S rRNA + S-adenosyl-L-methionine = N(4)-methylcytidine(1402) in 16S rRNA + S-adenosyl-L-homocysteine + H(+). Specifically methylates the N4 position of cytidine in position 1402 (C1402) of 16S rRNA. The polypeptide is Ribosomal RNA small subunit methyltransferase H (Albidiferax ferrireducens (strain ATCC BAA-621 / DSM 15236 / T118) (Rhodoferax ferrireducens)).